Reading from the N-terminus, the 158-residue chain is Protein Smg homolog (158 aa).

The protein belongs to the Smg family.

This is Protein Smg homolog from Shewanella sp. (strain ANA-3).